A 120-amino-acid polypeptide reads, in one-letter code: Chaperonin GroEL (120 aa).

Residue Asp23 to Thr27 coordinates ATP.

This sequence belongs to the chaperonin (HSP60) family. In terms of assembly, forms a cylinder of 14 subunits composed of two heptameric rings stacked back-to-back. Interacts with the co-chaperonin GroES.

It localises to the cytoplasm. The catalysed reaction is ATP + H2O + a folded polypeptide = ADP + phosphate + an unfolded polypeptide.. In terms of biological role, together with its co-chaperonin GroES, plays an essential role in assisting protein folding. The GroEL-GroES system forms a nano-cage that allows encapsulation of the non-native substrate proteins and provides a physical environment optimized to promote and accelerate protein folding. This chain is Chaperonin GroEL, found in Mycobacterium asiaticum.